The primary structure comprises 385 residues: Probable splicing factor YJU2B (385 aa).

The interval 1-26 (MGERKGQNKYYPPDFNPEKHGSLNRY) is disordered. Residue S40 is modified to Phosphoserine. The stretch at 182 to 215 (LNSMLRRHFREKKKAMQEEEEKDQALQAKANLAI) forms a coiled coil. The interval 256-385 (FPSAQGPSTS…VADYSDSESE (130 aa)) is disordered. Residues 260-270 (QGPSTSSSKAS) are compositionally biased toward polar residues. Position 306 is a phosphoserine (S306). 2 stretches are compositionally biased toward polar residues: residues 307 to 316 (PQCTADNSLS) and 359 to 373 (GSSQ…TPNA).

This sequence belongs to the CWC16 family.

Its subcellular location is the nucleus. May be involved in mRNA splicing. The polypeptide is Probable splicing factor YJU2B (Rattus norvegicus (Rat)).